A 234-amino-acid polypeptide reads, in one-letter code: Two-component response regulator ARR9 (234 aa).

The 138-residue stretch at 10 to 147 (HVLAVDDSLF…DLNKLKPHMM (138 aa)) folds into the Response regulatory domain. A 4-aspartylphosphate modification is found at Asp-80.

The protein belongs to the ARR family. Type-A subfamily. Interacts with AHP1 and AHP3. In terms of processing, two-component system major event consists of a His-to-Asp phosphorelay between a sensor histidine kinase (HK) and a response regulator (RR). In plants, the His-to-Asp phosphorelay involves an additional intermediate named Histidine-containing phosphotransfer protein (HPt). This multistep phosphorelay consists of a His-Asp-His-Asp sequential transfer of a phosphate group between first a His and an Asp of the HK protein, followed by the transfer to a conserved His of the HPt protein and finally the transfer to an Asp in the receiver domain of the RR protein. In terms of tissue distribution, predominantly expressed in roots.

It is found in the nucleus. Functionally, functions as a response regulator involved in His-to-Asp phosphorelay signal transduction system. Phosphorylation of the Asp residue in the receiver domain activates the ability of the protein to promote the transcription of target genes. Type-A response regulators seem to act as negative regulators of the cytokinin signaling. This chain is Two-component response regulator ARR9 (ARR9), found in Arabidopsis thaliana (Mouse-ear cress).